The chain runs to 140 residues: Large ribosomal subunit protein uL14 (140 aa).

Belongs to the universal ribosomal protein uL14 family. Part of the 50S ribosomal subunit. Forms a cluster with proteins L3 and L24e, part of which may contact the 16S rRNA in 2 intersubunit bridges.

Binds to 23S rRNA. Forms part of two intersubunit bridges in the 70S ribosome. In Aeropyrum pernix (strain ATCC 700893 / DSM 11879 / JCM 9820 / NBRC 100138 / K1), this protein is Large ribosomal subunit protein uL14.